The sequence spans 253 residues: ABC transporter D-alanine-binding periplasmic protein (253 aa).

The signal sequence occupies residues 1–22; it reads MLSKKFGLSMIVLGIMSSSAFA. Gly95, Ser97, Arg102, Ala147, and Glu191 together coordinate D-alanine.

The protein belongs to the bacterial solute-binding protein 3 family. As to quaternary structure, monomer.

The protein resides in the periplasm. In terms of biological role, part of the ABC transporter complex dalSTUV, that imports D-alanine into the cytoplasm. Helps protect the organism from oxidative killing by host neutrophils through sequestration of D-alanine, a substrate that is converted to hydrogen peroxide by the host enzyme DAO (D-amino acid oxidase). DalS shuttles D-alanine from the periplasm to the DalTUV complex situated in the inner membrane and through hydrolysis of ATP, D-alanine is transported across the membrane into the cytoplasm. Not required for the metabolism of D-alanine found in the stem peptide of peptidoglycan. The polypeptide is ABC transporter D-alanine-binding periplasmic protein (Salmonella typhimurium (strain LT2 / SGSC1412 / ATCC 700720)).